Consider the following 432-residue polypeptide: Pachytene checkpoint protein 2 homolog (432 aa).

Methionine 1 bears the N-acetylmethionine mark. 179 to 186 contributes to the ATP binding site; that stretch reads GPPGTGKT.

The protein belongs to the AAA ATPase family. PCH2 subfamily. Specifically interacts with the ligand binding domain of the thyroid receptor (TR). This interaction does not require the presence of thyroid hormone for its interaction. Interacts with HPV16 E1. Interacts with proteasome subunit PSMA8; to participate in meiosis progression during spermatogenesis.

Functionally, plays a key role in chromosome recombination and chromosome structure development during meiosis. Required at early steps in meiotic recombination that leads to non-crossovers pathways. Also needed for efficient completion of homologous synapsis by influencing crossover distribution along the chromosomes affecting both crossovers and non-crossovers pathways. Also required for development of higher-order chromosome structures and is needed for synaptonemal-complex formation. In males, required for efficient synapsis of the sex chromosomes and for sex body formation. Promotes early steps of the DNA double-strand breaks (DSBs) repair process upstream of the assembly of RAD51 complexes. Required for depletion of HORMAD1 and HORMAD2 from synapsed chromosomes. Plays a role in mitotic spindle assembly checkpoint (SAC) activation. This chain is Pachytene checkpoint protein 2 homolog (TRIP13), found in Homo sapiens (Human).